The chain runs to 421 residues: Protein PHLOEM UNLOADING MODULATOR (421 aa).

7 helical membrane passes run 30–50 (LMPV…LFYK), 60–80 (IPFL…ALCV), 124–144 (HIIG…SVVF), 158–178 (YIFT…STIL), 286–306 (AMAW…LFVA), 323–343 (CIVA…IWSA), and 397–417 (TVFA…ALTL).

The protein belongs to the sphingomyelin synthase family.

It localises to the membrane. It participates in sphingolipid metabolism. Catalyzes the biosynthesis of sphingolipids with very long-chain fatty acid (VLCFA). Required for the formation of plasmodesmal cytoplasmic sleeve during the transition from type I to type II plasmodesmata to modulate post-sieve elements (SE) unloading and symplastic cell-to-cell molecular trafficking at the phloem pole pericycle (PPP)-endodermis interface in roots. This chain is Protein PHLOEM UNLOADING MODULATOR, found in Arabidopsis thaliana (Mouse-ear cress).